The sequence spans 165 residues: Phosphopantetheine adenylyltransferase (165 aa).

Residue threonine 9 coordinates substrate. Residues 9–10 and histidine 17 contribute to the ATP site; that span reads TF. The substrate site is built by lysine 41, leucine 73, and arginine 87. Residues 88–90, glutamate 98, and 123–129 contribute to the ATP site; these read GLR and YQFISGT.

This sequence belongs to the bacterial CoaD family. As to quaternary structure, homohexamer. It depends on Mg(2+) as a cofactor.

The protein resides in the cytoplasm. The catalysed reaction is (R)-4'-phosphopantetheine + ATP + H(+) = 3'-dephospho-CoA + diphosphate. It participates in cofactor biosynthesis; coenzyme A biosynthesis; CoA from (R)-pantothenate: step 4/5. In terms of biological role, reversibly transfers an adenylyl group from ATP to 4'-phosphopantetheine, yielding dephospho-CoA (dPCoA) and pyrophosphate. The protein is Phosphopantetheine adenylyltransferase of Burkholderia lata (strain ATCC 17760 / DSM 23089 / LMG 22485 / NCIMB 9086 / R18194 / 383).